Consider the following 426-residue polypeptide: Enolase (426 aa).

Residue glutamine 163 participates in (2R)-2-phosphoglycerate binding. Catalysis depends on glutamate 205, which acts as the Proton donor. The Mg(2+) site is built by aspartate 242, glutamate 283, and aspartate 310. Positions 335, 364, 365, and 386 each coordinate (2R)-2-phosphoglycerate. Residue lysine 335 is the Proton acceptor of the active site.

The protein belongs to the enolase family. Requires Mg(2+) as cofactor.

It localises to the cytoplasm. Its subcellular location is the secreted. The protein localises to the cell surface. The enzyme catalyses (2R)-2-phosphoglycerate = phosphoenolpyruvate + H2O. It functions in the pathway carbohydrate degradation; glycolysis; pyruvate from D-glyceraldehyde 3-phosphate: step 4/5. In terms of biological role, catalyzes the reversible conversion of 2-phosphoglycerate (2-PG) into phosphoenolpyruvate (PEP). It is essential for the degradation of carbohydrates via glycolysis. This Beutenbergia cavernae (strain ATCC BAA-8 / DSM 12333 / CCUG 43141 / JCM 11478 / NBRC 16432 / NCIMB 13614 / HKI 0122) protein is Enolase.